We begin with the raw amino-acid sequence, 314 residues long: Testis-specific Y-encoded protein 4 (314 aa).

Belongs to the nucleosome assembly protein (NAP) family.

The protein resides in the cytoplasm. It localises to the nucleus. Its function is as follows. May be involved in sperm differentiation and proliferation. This chain is Testis-specific Y-encoded protein 4 (TSPY4), found in Homo sapiens (Human).